A 201-amino-acid polypeptide reads, in one-letter code: uncharacterized protein (201 aa).

Over residues 64–78 (DNEIKEEEESEEEEK) the composition is skewed to acidic residues. Disordered stretches follow at residues 64-114 (DNEI…FKNA) and 182-201 (ILPG…LSKQ). Over residues 96-106 (RNKHGRNRNPR) the composition is skewed to basic residues. Over residues 189–201 (GNTETVDQGLSKQ) the composition is skewed to polar residues.

This is an uncharacterized protein from Ostreid herpesvirus 1 (isolate France) (OsHV-1).